The sequence spans 464 residues: Dihydrolipoyllysine-residue succinyltransferase component of 2-oxoglutarate dehydrogenase complex 1, mitochondrial (464 aa).

The N-terminal 86 residues, 1–86 (MMLRAVFRRA…TALQRWVRPF (86 aa)), are a transit peptide targeting the mitochondrion. In terms of domain architecture, Lipoyl-binding spans 93 to 168 (VVEAVVPHMG…EPGNKVARIS (76 aa)). Lysine 134 carries the post-translational modification N6-lipoyllysine. Residues 168–242 (STSADAVSHV…DRERRVPMTR (75 aa)) form a disordered region. The span at 196 to 210 (EKPKVESTKVAEKPK) shows a compositional bias: basic and acidic residues. Over residues 211–220 (APSPPPPPPS) the composition is skewed to pro residues. Residues histidine 435 and aspartate 439 contribute to the active site.

This sequence belongs to the 2-oxoacid dehydrogenase family. Forms a 24-polypeptide structural core with octahedral symmetry. The cofactor is (R)-lipoate.

The protein localises to the mitochondrion. The enzyme catalyses N(6)-[(R)-dihydrolipoyl]-L-lysyl-[protein] + succinyl-CoA = N(6)-[(R)-S(8)-succinyldihydrolipoyl]-L-lysyl-[protein] + CoA. It functions in the pathway amino-acid degradation; L-lysine degradation via saccharopine pathway; glutaryl-CoA from L-lysine: step 6/6. The 2-oxoglutarate dehydrogenase complex catalyzes the overall conversion of 2-oxoglutarate to succinyl-CoA and CO(2). It contains multiple copies of three enzymatic components: 2-oxoglutarate dehydrogenase (E1), dihydrolipoamide succinyltransferase (E2) and lipoamide dehydrogenase (E3). The chain is Dihydrolipoyllysine-residue succinyltransferase component of 2-oxoglutarate dehydrogenase complex 1, mitochondrial from Arabidopsis thaliana (Mouse-ear cress).